The chain runs to 266 residues: L-cystine-binding protein TcyJ (266 aa).

The signal sequence occupies residues 1–29 (MKLAHLGRQALMGVMAVALVAGMSVKSFA).

The protein belongs to the bacterial solute-binding protein 3 family. As to quaternary structure, the complex is composed of two ATP-binding proteins (TcyN), two transmembrane proteins (TcyL) and a solute-binding protein (TcyJ).

The protein resides in the periplasm. In terms of biological role, part of the ABC transporter complex TcyJLN involved in L-cystine import. Binds cystine. This is L-cystine-binding protein TcyJ from Escherichia coli O6:H1 (strain CFT073 / ATCC 700928 / UPEC).